A 161-amino-acid polypeptide reads, in one-letter code: Phosphopantetheine adenylyltransferase (161 aa).

T9 contributes to the substrate binding site. Residues 9–10 (TF) and H17 contribute to the ATP site. Residues K41, L73, and R87 each contribute to the substrate site. Residues 88 to 90 (GMR), E98, and 123 to 129 (WSYVSST) contribute to the ATP site.

Belongs to the bacterial CoaD family. In terms of assembly, homohexamer. Mg(2+) serves as cofactor.

It localises to the cytoplasm. It carries out the reaction (R)-4'-phosphopantetheine + ATP + H(+) = 3'-dephospho-CoA + diphosphate. Its pathway is cofactor biosynthesis; coenzyme A biosynthesis; CoA from (R)-pantothenate: step 4/5. Its function is as follows. Reversibly transfers an adenylyl group from ATP to 4'-phosphopantetheine, yielding dephospho-CoA (dPCoA) and pyrophosphate. The protein is Phosphopantetheine adenylyltransferase of Actinobacillus succinogenes (strain ATCC 55618 / DSM 22257 / CCUG 43843 / 130Z).